A 391-amino-acid chain; its full sequence is Phosphoprotein (391 aa).

A phosphothreonine mark is found at T10, T16, and T39. S69 bears the Phosphoserine mark. 2 disordered regions span residues 82–101 (SSSE…FAQT) and 143–208 (PRTS…PANV). A phosphothreonine mark is found at T91, T150, and T165. Phosphoserine is present on S188. Over residues 198–208 (LPQQDSTPANV) the composition is skewed to polar residues. Residues 218 to 245 (ANEIMDLLRGMDARLQHLEQKVDKVLAQ) are a coiled coil. T250 is modified (phosphothreonine). S257 carries the phosphoserine modification. Phosphothreonine occurs at positions 258 and 282. Residues S292 and S294 each carry the phosphoserine modification. Phosphothreonine is present on T298. 2 positions are modified to phosphoserine: S301 and S374. The tract at residues 343–391 (AGRKVMITKMITDCVANPQMKQAFEQRLAKASTEDALNDIKRDIIRSAI) is interaction with the nucleoprotein. Residues 348–391 (MITKMITDCVANPQMKQAFEQRLAKASTEDALNDIKRDIIRSAI) form a x domain (XD) region. T375 carries the post-translational modification Phosphothreonine.

The protein belongs to the rubulavirus/avulavirus P protein family. Homotetramer. Interacts (via multimerization domain) with polymerase L; this interaction forms the polymerase L-P complex. Interacts (via N-terminus) with N0 (via Ncore); this interaction allows P to chaperon N0 to avoid N polymerization before encapsidation. Interacts (via C-terminus) with N-RNA template; this interaction positions the polymerase on the template for both transcription and replication. Interacts with host RPS6KB1 kinase; this interaction may play a role in the viral replication and transcription.

The protein localises to the virion. In terms of biological role, essential cofactor of the RNA polymerase L that plays a central role in the transcription and replication by forming the polymerase complex with RNA polymerase L and recruiting L to the genomic N-RNA template for RNA synthesis. Also plays a central role in the encapsidation of nascent RNA chains by forming the encapsidation complex with the nucleocapsid protein N (N-P complex). Acts as a chaperone for newly synthesized free N protein, so-called N0, allowing encapsidation of nascent RNA chains during replication. The nucleoprotein protein N prevents excessive phosphorylation of P, which leads to down-regulation of viral transcription/ replication. Participates, together with N, in the formation of viral factories (viroplasms), which are large inclusions in the host cytoplasm where replication takes place. The sequence is that of Phosphoprotein (V/P) from Mumps orthorubulavirus (MuV).